Here is a 251-residue protein sequence, read N- to C-terminus: Ubiquinone/menaquinone biosynthesis C-methyltransferase UbiE (251 aa).

Residues Thr74, Asp95, 123-124, and Ser140 contribute to the S-adenosyl-L-methionine site; that span reads NA.

This sequence belongs to the class I-like SAM-binding methyltransferase superfamily. MenG/UbiE family.

It catalyses the reaction a 2-demethylmenaquinol + S-adenosyl-L-methionine = a menaquinol + S-adenosyl-L-homocysteine + H(+). The catalysed reaction is a 2-methoxy-6-(all-trans-polyprenyl)benzene-1,4-diol + S-adenosyl-L-methionine = a 5-methoxy-2-methyl-3-(all-trans-polyprenyl)benzene-1,4-diol + S-adenosyl-L-homocysteine + H(+). It functions in the pathway quinol/quinone metabolism; menaquinone biosynthesis; menaquinol from 1,4-dihydroxy-2-naphthoate: step 2/2. Its pathway is cofactor biosynthesis; ubiquinone biosynthesis. In terms of biological role, methyltransferase required for the conversion of demethylmenaquinol (DMKH2) to menaquinol (MKH2) and the conversion of 2-polyprenyl-6-methoxy-1,4-benzoquinol (DDMQH2) to 2-polyprenyl-3-methyl-6-methoxy-1,4-benzoquinol (DMQH2). The protein is Ubiquinone/menaquinone biosynthesis C-methyltransferase UbiE of Escherichia coli O1:K1 / APEC.